The sequence spans 114 residues: Probable 4-amino-4-deoxy-L-arabinose-phosphoundecaprenol flippase subunit ArnE (114 aa).

A run of 3 helical transmembrane segments spans residues 38–58, 64–84, and 94–114; these read LTLR…LLWL, LPLS…TLAA, and LRHW…SWHL. Positions 43-112 constitute an EamA domain; the sequence is LAIAVVSLGL…IMFGILLMSW (70 aa).

It belongs to the ArnE family. Heterodimer of ArnE and ArnF.

It is found in the cell inner membrane. It functions in the pathway bacterial outer membrane biogenesis; lipopolysaccharide biosynthesis. Its function is as follows. Translocates 4-amino-4-deoxy-L-arabinose-phosphoundecaprenol (alpha-L-Ara4N-phosphoundecaprenol) from the cytoplasmic to the periplasmic side of the inner membrane. This chain is Probable 4-amino-4-deoxy-L-arabinose-phosphoundecaprenol flippase subunit ArnE, found in Yersinia pestis bv. Antiqua (strain Antiqua).